Reading from the N-terminus, the 93-residue chain is Putative defensin-like protein 283 (93 aa).

Positions 1–24 are cleaved as a signal peptide; sequence MTKIGFYLATYATIYIILSPGLLA. 3 disulfide bridges follow: cysteine 43-cysteine 83, cysteine 66-cysteine 90, and cysteine 72-cysteine 92.

The protein belongs to the DEFL family.

It localises to the secreted. The sequence is that of Putative defensin-like protein 283 from Arabidopsis thaliana (Mouse-ear cress).